Consider the following 265-residue polypeptide: Probable autolysin SsaALP (265 aa).

Residues 1-25 (MKKLAFAITATSGAAAFLTHHDAQA) form the signal peptide. LysM domains follow at residues 27–70 (TQHT…VISV) and 89–132 (SSHT…TLQI). The disordered stretch occupies residues 72–92 (GSDAQNTSNTSPQAGSASSHT). The segment covering 74 to 92 (DAQNTSNTSPQAGSASSHT) has biased composition (polar residues). A Peptidase C51 domain is found at 141-265 (TPTATTGSNG…SEVSSYAFIH (125 aa)).

It carries out the reaction Hydrolyzes the link between N-acetylmuramoyl residues and L-amino acid residues in certain cell-wall glycopeptides.. In terms of biological role, has weak lytic activity toward S.aureus cells. This Staphylococcus aureus (strain NCTC 8325 / PS 47) protein is Probable autolysin SsaALP.